A 255-amino-acid chain; its full sequence is Tachylectin-2 (255 aa).

The first 19 residues, 1 to 19 (MKFLLVVLGFIGFLKDGIT), serve as a signal peptide directing secretion. WD repeat units lie at residues 20-67 (VGGE…FLFL), 68-114 (SPGG…FLFF), 115-161 (DPNG…FLFF), 162-208 (HPNG…FLFF), and 209-255 (SSVG…FLFF).

In terms of assembly, monomer.

Its subcellular location is the secreted. The protein localises to the cytoplasmic granule. Functionally, lectin that binds specifically to N-acetylglucosamine and N-acetylgalactosamine. Is part of the innate immunity host defense system of the horseshoe crab. This Tachypleus tridentatus (Japanese horseshoe crab) protein is Tachylectin-2.